A 228-amino-acid chain; its full sequence is ATP synthase F(0) complex subunit a (228 aa).

The next 6 membrane-spanning stretches (helical) occupy residues 13–33 (YFLG…TMFI), 70–90 (WALL…TGLL), 100–120 (LSLN…MGAT), 140–160 (APFL…ALGV), 162–182 (LTAN…ALIN), and 190–210 (LFLT…VSFI).

The protein belongs to the ATPase A chain family. In terms of assembly, component of the ATP synthase complex composed at least of ATP5F1A/subunit alpha, ATP5F1B/subunit beta, ATP5MC1/subunit c (homooctomer), MT-ATP6/subunit a, MT-ATP8/subunit 8, ATP5ME/subunit e, ATP5MF/subunit f, ATP5MG/subunit g, ATP5MK/subunit k, ATP5MJ/subunit j, ATP5F1C/subunit gamma, ATP5F1D/subunit delta, ATP5F1E/subunit epsilon, ATP5PF/subunit F6, ATP5PB/subunit b, ATP5PD/subunit d, ATP5PO/subunit OSCP. ATP synthase complex consists of a soluble F(1) head domain (subunits alpha(3) and beta(3)) - the catalytic core - and a membrane F(0) domain - the membrane proton channel (subunits c, a, 8, e, f, g, k and j). These two domains are linked by a central stalk (subunits gamma, delta, and epsilon) rotating inside the F1 region and a stationary peripheral stalk (subunits F6, b, d, and OSCP). Interacts with DNAJC30; interaction is direct.

The protein resides in the mitochondrion inner membrane. It catalyses the reaction H(+)(in) = H(+)(out). Functionally, subunit a, of the mitochondrial membrane ATP synthase complex (F(1)F(0) ATP synthase or Complex V) that produces ATP from ADP in the presence of a proton gradient across the membrane which is generated by electron transport complexes of the respiratory chain. ATP synthase complex consist of a soluble F(1) head domain - the catalytic core - and a membrane F(1) domain - the membrane proton channel. These two domains are linked by a central stalk rotating inside the F(1) region and a stationary peripheral stalk. During catalysis, ATP synthesis in the catalytic domain of F(1) is coupled via a rotary mechanism of the central stalk subunits to proton translocation. With the subunit c (ATP5MC1), forms the proton-conducting channel in the F(0) domain, that contains two crucial half-channels (inlet and outlet) that facilitate proton movement from the mitochondrial intermembrane space (IMS) into the matrix. Protons are taken up via the inlet half-channel and released through the outlet half-channel, following a Grotthuss mechanism. This chain is ATP synthase F(0) complex subunit a, found in Myxine glutinosa (Atlantic hagfish).